A 370-amino-acid polypeptide reads, in one-letter code: GTPase Obg (370 aa).

The Obg domain occupies 1–159 (MKFIDEARIE…RMLRLELKVL (159 aa)). Positions 160–334 (ADVGLLGMPN…LCYAIYDYLA (175 aa)) constitute an OBG-type G domain. GTP contacts are provided by residues 166–173 (GMPNAGKS), 191–195 (FTTLA), 213–216 (DIPG), 284–287 (NKLD), and 315–317 (SAL). Mg(2+) contacts are provided by S173 and T193. Residues 344–370 (EEEDLATDVRFRDAPPADGGATPGGDA) are disordered.

Belongs to the TRAFAC class OBG-HflX-like GTPase superfamily. OBG GTPase family. As to quaternary structure, monomer. Mg(2+) serves as cofactor.

The protein localises to the cytoplasm. An essential GTPase which binds GTP, GDP and possibly (p)ppGpp with moderate affinity, with high nucleotide exchange rates and a fairly low GTP hydrolysis rate. Plays a role in control of the cell cycle, stress response, ribosome biogenesis and in those bacteria that undergo differentiation, in morphogenesis control. The protein is GTPase Obg of Burkholderia ambifaria (strain MC40-6).